We begin with the raw amino-acid sequence, 675 residues long: Vacuolar protein sorting-associated protein 5 (675 aa).

3 disordered regions span residues 1-26 (MDYE…QSLV), 65-84 (EWKD…EHDN), and 165-219 (RAQR…RREN). Over residues 168–180 (RNSKRNHSLKAKR) the composition is skewed to basic residues. Positions 195-204 (PLKKAEKENE) are enriched in basic and acidic residues. In terms of domain architecture, PX spans 279-394 (VAFKVEVKDP…LFLTSDDFSS (116 aa)). 3 residues coordinate a 1,2-diacyl-sn-glycero-3-phospho-(1D-myo-inositol-3-phosphate): Arg320, Lys346, and Arg360.

It belongs to the sorting nexin family. As to quaternary structure, component of the retromer complex which consists of VPS29, VPS26, VPS35, VPS5 and VPS17. Component of a retromer subcomplex consisting of VPSD5 and VPS17. Phosphorylated on serine residue(s).

It localises to the cytoplasm. It is found in the golgi apparatus membrane. The protein localises to the endosome membrane. In terms of biological role, plays a role in vesicular protein sorting. Required for retention of late Golgi membrane proteins and vacuolar biogenesis. Component of the membrane-associated retromer complex which is essential in endosome-to-Golgi retrograde transport. The VPS5-VPS17 subcomplex may assemble onto the membrane to promote vesicle formation. This chain is Vacuolar protein sorting-associated protein 5 (VPS5), found in Saccharomyces cerevisiae (strain ATCC 204508 / S288c) (Baker's yeast).